The following is a 258-amino-acid chain: MRILLTNDDGIHAEGLAVLERIARKLSDDVWVVAPETDQSGLAHSLTLSEPLRLRQIDDRHFALRGTPTDCVIMGVRHVLPGAPDLILSGVNSGANIADDVTYSGTVAGAMEGTLLGVRSIALSQEYEYEGDRRIVPWETAETHAPDLIKKLMEAGWPEGVLLNLNFPNCGADEVKGTRVTAQGKLSHDARLDERRDGRGFPYFWLHFGRGKAPVADDSDIAAIRSDCISVTPLHLDLTAHKVRAELSAALGVVELGG.

The a divalent metal cation site is built by D8, D9, S40, and N92.

Belongs to the SurE nucleotidase family. The cofactor is a divalent metal cation.

The protein localises to the cytoplasm. It carries out the reaction a ribonucleoside 5'-phosphate + H2O = a ribonucleoside + phosphate. Functionally, nucleotidase that shows phosphatase activity on nucleoside 5'-monophosphates. This chain is 5'-nucleotidase SurE, found in Brucella anthropi (strain ATCC 49188 / DSM 6882 / CCUG 24695 / JCM 21032 / LMG 3331 / NBRC 15819 / NCTC 12168 / Alc 37) (Ochrobactrum anthropi).